We begin with the raw amino-acid sequence, 906 residues long: Probable disease resistance RPP8-like protein 2 (906 aa).

Positions 15–68 form a coiled coil; sequence ELLSRESARLNGIDEQVDGLKRQLGRLQSLLKDADAKKNETERVRNFLEDVKDI. The 311-residue stretch at 144-454 folds into the NB-ARC domain; that stretch reads LQERQREIRQ…AEGIITPFHD (311 aa). 190–197 is a binding site for ATP; it reads GMGGIGKT. LRR repeat units follow at residues 573–597, 598–621, 623–644, 646–671, 672–696, 704–727, 740–766, 767–790, 791–818, and 840–865; these read LPLLRVLDLSYVQFEGGKLPSSIGD, LIHLRFLSLYEAGVSHLPSSLGNL, LLLCLNLGVADRLLVHVPNVLK, MQELRYLRLPRSMPAKTKLELGDLVN, LESLTNFSTKHGSVTDLLRMTKLSV, ECTFETLLLSLRELRNLETLSFHD, LLVLDFIHLKDLTLSMHLPRFPDQYRF, PPHLAHIWLIGCRMEEDPMPILEK, LLHLKSVYLSSGAFLGRRMVCSKGGFPQ, and MPCLRTLTIDNCKKLKQLPDGLKYVT.

This sequence belongs to the disease resistance NB-LRR family. RPP8/HRT subfamily.

Functionally, potential disease resistance protein. The chain is Probable disease resistance RPP8-like protein 2 (RPP8L2) from Arabidopsis thaliana (Mouse-ear cress).